Here is a 333-residue protein sequence, read N- to C-terminus: Cytochrome f (333 aa).

The signal sequence occupies residues 1–37; the sequence is MRNSCKKARRTRPLKATIQALLVAIATMTFFFTSDIA. Topologically, residues 38 to 298 are cytoplasmic; sequence LPQSAAAYPF…TEIVLQDPNR (261 aa). Residues tyrosine 45, cysteine 66, cysteine 69, and histidine 70 each coordinate heme. The chain crosses the membrane as a helical span at residues 299 to 319; it reads VKWMIAFICLVMLAQLMLILK. Residues 320–333 lie on the Lumenal, thylakoid side of the membrane; that stretch reads KKQVEKVQAAEMNF.

It belongs to the cytochrome f family. In terms of assembly, the 4 large subunits of the cytochrome b6-f complex are cytochrome b6, subunit IV (17 kDa polypeptide, PetD), cytochrome f and the Rieske protein, while the 4 small subunits are PetG, PetL, PetM and PetN. The complex functions as a dimer. Heme serves as cofactor.

The protein resides in the cellular thylakoid membrane. Component of the cytochrome b6-f complex, which mediates electron transfer between photosystem II (PSII) and photosystem I (PSI), cyclic electron flow around PSI, and state transitions. This is Cytochrome f (petA) from Mastigocladus laminosus (Fischerella sp.).